Reading from the N-terminus, the 648-residue chain is Solute carrier family 23 member 2 (648 aa).

Residues 1-21 (MMGIGKNTASKSVEAGGSTEG) form a disordered region. At 9-110 (ASKSVEAGGS…LCIFLGLQHY (102 aa)) the chain is on the cytoplasmic side. At Ser70 the chain carries Phosphoserine. The residue at position 75 (Thr75) is a Phosphothreonine. Phosphoserine is present on Ser78. Position 79 is a phosphothreonine (Thr79). A Phosphoserine modification is found at Ser81. The helical transmembrane segment at 111 to 131 (LTCFSGTIAVPFLLADAMCVG) threads the bilayer. Residues 132 to 139 (DDQWATSQ) are Extracellular-facing. The helical transmembrane segment at 140 to 160 (LIGTIFFCVGITTLLQTTFGC) threads the bilayer. Position 161 (Arg161) is a topological domain, cytoplasmic. The chain crosses the membrane as a helical span at residues 162 to 182 (LPLFQASAFAFLAPARAILSL). Residues 183 to 216 (DKWKCNTTEITVANGTAELLEHIWHPRIQEIQGA) are Extracellular-facing. Asn188 and Asn196 each carry an N-linked (GlcNAc...) asparagine glycan. A helical membrane pass occupies residues 217-237 (IIMSSLIEVVIGLLGLPGALL). Residues 238–264 (RYIGPLTITPTVALIGLSGFQAAGERA) are Cytoplasmic-facing. Residues 265 to 282 (GKHWGIAMLTIFLVLLFS) traverse the membrane as a helical segment. Over 283–286 (QYAR) the chain is Extracellular. An intramembrane region (helical) is located at residues 287-300 (NVKFPLPIYKSKKG). Residues 301-307 (WTAYKFQ) lie on the Extracellular side of the membrane. Residues 308–328 (LFKMFPIILAILVSWLLCFIF) traverse the membrane as a helical segment. The Cytoplasmic segment spans residues 329-369 (TVTDVFPSNSTDYGYYARTDARKGVLLVAPWFKVPYPFQWG). The chain crosses the membrane as a helical span at residues 370–390 (MPTVSAAGVIGMLSAVVASII). Residues 391–415 (ESIGDYYACARLSCAPPPPIHAINR) lie on the Extracellular side of the membrane. The helical transmembrane segment at 416–436 (GIFVEGLSCVLDGIFGTGNGS) threads the bilayer. Residues 437–459 (TSSSPNIGVLGITKVGSRRVIQY) are Cytoplasmic-facing. Residues 460–480 (GAALMLGLGMVGKFSALFASL) traverse the membrane as a helical segment. Residues 481–483 (PDP) are Extracellular-facing. Residues 484–504 (VLGALFCTLFGMITAVGLSNL) traverse the membrane as a helical segment. Residues 505 to 514 (QFIDLNSSRN) lie on the Cytoplasmic side of the membrane. The chain crosses the membrane as a helical span at residues 515-535 (LFVLGFSIFFGLVLPSYLRQN). Residues 536 to 545 (PLVTGITGID) are Extracellular-facing. Residues 546–566 (QILNVLLTTAMFVGGCVAFIL) form a helical membrane-spanning segment. Residues 567–648 (DNTIPGTPEE…SSDKDSQATV (82 aa)) are Cytoplasmic-facing. Thr647 is subject to Phosphothreonine.

The protein belongs to the nucleobase:cation symporter-2 (NCS2) (TC 2.A.40) family. Interacts with CLSTN3. In terms of processing, phosphorylated. Expressed in metabolically active and specialized tissues, including high expression in brain and adrenals. Detected in a wide range of tissues. Expression in kidney is almost undetectable.

The protein localises to the cell membrane. It carries out the reaction L-ascorbate(out) + 2 Na(+)(out) = L-ascorbate(in) + 2 Na(+)(in). Its function is as follows. Sodium/ascorbate cotransporter. Mediates electrogenic uptake of vitamin C, with a stoichiometry of 2 Na(+) for each ascorbate. This chain is Solute carrier family 23 member 2 (Slc23a2), found in Mus musculus (Mouse).